The sequence spans 821 residues: Bifunctional dethiobiotin synthetase/7,8-diamino-pelargonic acid aminotransferase, mitochondrial (821 aa).

The dethiobiotin synthetase stretch occupies residues 28-283 (SPAFAVFGAN…VHVLPPIPED (256 aa)). Residue 39–44 (GVGKTL) participates in ATP binding. Thr-43 is a Mg(2+) binding site. Thr-72 is a substrate binding site. Glu-194 contacts Mg(2+). 194 to 197 (ETAG) lines the ATP pocket. The interval 316-820 (RLNSMQRKSK…AKVHRRLQKL (505 aa)) is 7,8-diamino-pelargonic acid aminotransferase. 374 to 375 (WW) contacts (8S)-8-amino-7-oxononanoate. 436-437 (GS) provides a ligand contact to pyridoxal 5'-phosphate. Tyr-482 contributes to the (8S)-8-amino-7-oxononanoate binding site. Pyridoxal 5'-phosphate is bound at residue Asp-626. (8S)-8-amino-7-oxononanoate-binding residues include Lys-655 and Gly-689. The residue at position 655 (Lys-655) is an N6-(pyridoxal phosphate)lysine. Ser-691 provides a ligand contact to pyridoxal 5'-phosphate. (8S)-8-amino-7-oxononanoate is bound at residue Arg-787.

It in the N-terminal section; belongs to the dethiobiotin synthetase family. The protein in the C-terminal section; belongs to the class-III pyridoxal-phosphate-dependent aminotransferase family. BioA subfamily. Mg(2+) is required as a cofactor. Pyridoxal 5'-phosphate serves as cofactor.

It is found in the mitochondrion. The catalysed reaction is (7R,8S)-7,8-diammoniononanoate + CO2 + ATP = (4R,5S)-dethiobiotin + ADP + phosphate + 3 H(+). It catalyses the reaction (8S)-8-amino-7-oxononanoate + S-adenosyl-L-methionine = S-adenosyl-4-methylsulfanyl-2-oxobutanoate + (7R,8S)-7,8-diammoniononanoate. The protein operates within cofactor biosynthesis; biotin biosynthesis; biotin from 7,8-diaminononanoate: step 1/2. Its pathway is cofactor biosynthesis; biotin biosynthesis; 7,8-diaminononanoate from 8-amino-7-oxononanoate (SAM route): step 1/1. Its function is as follows. Bifunctional enzyme that catalyzes two different reactions involved in the biotin biosynthesis. Functionally, catalyzes a mechanistically unusual reaction, the ATP-dependent insertion of CO2 between the N7 and N8 nitrogen atoms of 7,8-diaminopelargonic acid (DAPA) to form an ureido ring. Catalyzes the transfer of the alpha-amino group from S-adenosyl-L-methionine (SAM) to 7-keto-8-aminopelargonic acid (KAPA) to form 7,8-diaminopelargonic acid (DAPA). It is the only aminotransferase known to utilize SAM as an amino donor. The sequence is that of Bifunctional dethiobiotin synthetase/7,8-diamino-pelargonic acid aminotransferase, mitochondrial (BIO3-BIO1) from Oryza sativa subsp. japonica (Rice).